A 471-amino-acid polypeptide reads, in one-letter code: Putative multidrug resistance protein MdtD (471 aa).

The Periplasmic portion of the chain corresponds to 1 to 11 (MTDLPDSTRWQ). Residues 12-32 (LWIVAFGFFMQSLDTTIVNTA) traverse the membrane as a helical segment. The Cytoplasmic segment spans residues 33–48 (LPSMAQSLGESPLHMH). A helical membrane pass occupies residues 49-69 (MVIVSYVLTVAVMLPASGWLA). Topologically, residues 70 to 76 (DKVGVRN) are periplasmic. The chain crosses the membrane as a helical span at residues 77–97 (IFFTAIVLFTLGSLFCALSGT). The Cytoplasmic segment spans residues 98-101 (LNEL). Residues 102–124 (LLARALQGVGGAMMVPVGRLTVM) traverse the membrane as a helical segment. The Periplasmic segment spans residues 125–137 (KIVPREQYMAAMT). The chain crosses the membrane as a helical span at residues 138–158 (FVTLPGQVGPLLGPALGGLLV). Over 159–164 (EYASWH) the chain is Cytoplasmic. The helical transmembrane segment at 165-185 (WIFLINIPVGIIGAIATLMLM) threads the bilayer. Topologically, residues 186-196 (PNYTMQTRRFD) are periplasmic. The helical transmembrane segment at 197–217 (LSGFLLLAVGMAVLTLALDGS) threads the bilayer. Residues 218 to 224 (KGTGFSP) lie on the Cytoplasmic side of the membrane. Residues 225-245 (LAIAGLVAVGVVALVLYLLHA) form a helical membrane-spanning segment. The Periplasmic portion of the chain corresponds to 246 to 262 (QNNNRALFSLKLFRTRT). The chain crosses the membrane as a helical span at residues 263 to 283 (FSLGLAGSFAGRIGSGMLPFM). Topologically, residues 284 to 285 (TP) are cytoplasmic. The helical transmembrane segment at 286-306 (VFLQIGLGFSPFHAGLMMIPM) threads the bilayer. Topologically, residues 307-341 (VLGSMGMKRIVVQVVNRFGYRRVLVATTLGLSLVT) are periplasmic. Residues 342 to 362 (LLFMTTALLGWYYVLPFVLFL) form a helical membrane-spanning segment. The Cytoplasmic segment spans residues 363–395 (QGMVNSTRFSSMNTLTLKDLPDNLASSGNSLLS). Residues 396-416 (MIMQLSMSIGVTIAGLLLGLF) traverse the membrane as a helical segment. Over 417 to 430 (GSQHVSVDSGTTQT) the chain is Periplasmic. The chain crosses the membrane as a helical span at residues 431-451 (VFMYTWLSMAFIIALPAFVFA). Topologically, residues 452 to 471 (RVPSDTHQNVAISRRKRSAQ) are cytoplasmic.

Belongs to the major facilitator superfamily. TCR/Tet family.

It is found in the cell inner membrane. In Escherichia coli O45:K1 (strain S88 / ExPEC), this protein is Putative multidrug resistance protein MdtD.